A 212-amino-acid polypeptide reads, in one-letter code: Inner membrane-spanning protein YciB (212 aa).

5 consecutive transmembrane segments (helical) span residues 49–69 (APVL…VLYL), 78–98 (TMLW…IWFH), 105–125 (WKPS…PIVA), 150–170 (LAWA…AYNF), and 178–198 (FKAF…GLYM).

Belongs to the YciB family.

The protein localises to the cell inner membrane. Its function is as follows. Plays a role in cell envelope biogenesis, maintenance of cell envelope integrity and membrane homeostasis. In Leptothrix cholodnii (strain ATCC 51168 / LMG 8142 / SP-6) (Leptothrix discophora (strain SP-6)), this protein is Inner membrane-spanning protein YciB.